Consider the following 152-residue polypeptide: ESAT-6 secretion machinery protein EssA (152 aa).

At 1-114 (MLMNSVIALT…PYIQNKQEKK (114 aa)) the chain is on the cytoplasmic side. The helical transmembrane segment at 115 to 135 (IFPYILMSVGAFLTLGFVIFS) threads the bilayer. The Extracellular portion of the chain corresponds to 136-152 (IHKGRRTKNESARKSNI).

This sequence belongs to the EssA family.

Its subcellular location is the cell membrane. In terms of biological role, component of the ESAT-6 secretion system (Ess). Required for the secretion of EsxA. This chain is ESAT-6 secretion machinery protein EssA, found in Staphylococcus aureus (strain MRSA252).